The chain runs to 96 residues: Small ribosomal subunit protein uS15 (96 aa).

It belongs to the universal ribosomal protein uS15 family. As to quaternary structure, part of the 30S ribosomal subunit. Forms a bridge to the 50S subunit in the 70S ribosome, contacting the 23S rRNA.

In terms of biological role, one of the primary rRNA binding proteins, it binds directly to 16S rRNA where it helps nucleate assembly of the platform of the 30S subunit by binding and bridging several RNA helices of the 16S rRNA. Its function is as follows. Forms an intersubunit bridge (bridge B4) with the 23S rRNA of the 50S subunit in the ribosome. The protein is Small ribosomal subunit protein uS15 of Streptomyces griseus subsp. griseus (strain JCM 4626 / CBS 651.72 / NBRC 13350 / KCC S-0626 / ISP 5235).